Reading from the N-terminus, the 368-residue chain is Phosphate acyltransferase (368 aa).

Residues 337 to 368 (LEQAARDASGAGQASPIAGQPAEPYAAQSSKA) form a disordered region.

It belongs to the PlsX family. Homodimer. Probably interacts with PlsY.

It localises to the cytoplasm. The enzyme catalyses a fatty acyl-[ACP] + phosphate = an acyl phosphate + holo-[ACP]. It functions in the pathway lipid metabolism; phospholipid metabolism. Its function is as follows. Catalyzes the reversible formation of acyl-phosphate (acyl-PO(4)) from acyl-[acyl-carrier-protein] (acyl-ACP). This enzyme utilizes acyl-ACP as fatty acyl donor, but not acyl-CoA. The sequence is that of Phosphate acyltransferase from Paraburkholderia phytofirmans (strain DSM 17436 / LMG 22146 / PsJN) (Burkholderia phytofirmans).